The primary structure comprises 120 residues: NAD(P)H-quinone oxidoreductase subunit 3, chloroplastic (120 aa).

3 consecutive transmembrane segments (helical) span residues 14 to 34 (LIIS…LAPI), 64 to 84 (MFAL…PWAM), and 88 to 108 (ILGV…IVGL).

This sequence belongs to the complex I subunit 3 family. NDH is composed of at least 16 different subunits, 5 of which are encoded in the nucleus.

The protein localises to the plastid. Its subcellular location is the chloroplast thylakoid membrane. It carries out the reaction a plastoquinone + NADH + (n+1) H(+)(in) = a plastoquinol + NAD(+) + n H(+)(out). The catalysed reaction is a plastoquinone + NADPH + (n+1) H(+)(in) = a plastoquinol + NADP(+) + n H(+)(out). Its function is as follows. NDH shuttles electrons from NAD(P)H:plastoquinone, via FMN and iron-sulfur (Fe-S) centers, to quinones in the photosynthetic chain and possibly in a chloroplast respiratory chain. The immediate electron acceptor for the enzyme in this species is believed to be plastoquinone. Couples the redox reaction to proton translocation, and thus conserves the redox energy in a proton gradient. The protein is NAD(P)H-quinone oxidoreductase subunit 3, chloroplastic of Coffea arabica (Arabian coffee).